Here is a 199-residue protein sequence, read N- to C-terminus: Peptidyl-tRNA hydrolase (199 aa).

Tyrosine 15 contacts tRNA. Histidine 20 functions as the Proton acceptor in the catalytic mechanism. TRNA-binding residues include tyrosine 66, asparagine 68, and asparagine 114.

This sequence belongs to the PTH family. As to quaternary structure, monomer.

It localises to the cytoplasm. The enzyme catalyses an N-acyl-L-alpha-aminoacyl-tRNA + H2O = an N-acyl-L-amino acid + a tRNA + H(+). In terms of biological role, hydrolyzes ribosome-free peptidyl-tRNAs (with 1 or more amino acids incorporated), which drop off the ribosome during protein synthesis, or as a result of ribosome stalling. Its function is as follows. Catalyzes the release of premature peptidyl moieties from peptidyl-tRNA molecules trapped in stalled 50S ribosomal subunits, and thus maintains levels of free tRNAs and 50S ribosomes. This Burkholderia cenocepacia (strain HI2424) protein is Peptidyl-tRNA hydrolase.